Here is a 993-residue protein sequence, read N- to C-terminus: ATP-dependent DNA helicase MPH1 (993 aa).

Positions 94-261 (IVHKSLFQNT…EVVNNLDISK (168 aa)) constitute a Helicase ATP-binding domain. Residue 107-114 (IPTGMGKT) coordinates ATP. The DEAH box signature appears at 209 to 212 (DEAH). The Helicase C-terminal domain maps to 507-655 (KVERLHRQEQ…CIDYKKSDRI (149 aa)). The segment at 530–551 (NDKLERSARRTGSSEEAQISGM) is disordered. Positions 539 to 551 (RTGSSEEAQISGM) are enriched in polar residues.

Belongs to the DEAD box helicase family. DEAH subfamily. FANCM sub-subfamily. Interacts with the MHF histone-fold complex to form the FANCM-MHF complex.

The protein resides in the nucleus. The catalysed reaction is ATP + H2O = ADP + phosphate + H(+). Its function is as follows. ATP-dependent DNA helicase involved in DNA damage repair by homologous recombination and in genome maintenance. Capable of unwinding D-loops. Plays a role in limiting crossover recombinants during mitotic DNA double-strand break (DSB) repair. Component of a FANCM-MHF complex which promotes gene conversion at blocked replication forks, probably by reversal of the stalled fork. The chain is ATP-dependent DNA helicase MPH1 from Saccharomyces cerevisiae (strain YJM789) (Baker's yeast).